The sequence spans 381 residues: Chaperone protein DnaJ (381 aa).

A J domain is found at 5 to 73 (DYYEVLGVGK…EKKAAYDQYG (69 aa)). The CR-type zinc-finger motif lies at 141 to 219 (GHEAQIRVPH…CHGQGKLKSQ (79 aa)). Zn(2+)-binding residues include C154, C157, C171, C174, C193, C196, C207, and C210. CXXCXGXG motif repeat units follow at residues 154–161 (CDHCHGNG), 171–178 (CPTCHGAG), 193–200 (CPKCHGSG), and 207–214 (CTKCHGQG). The disordered stretch occupies residues 357 to 381 (SVHEGGSRHSPQEQSWLDKVKSFFS).

Belongs to the DnaJ family. As to quaternary structure, homodimer. Zn(2+) serves as cofactor.

It localises to the cytoplasm. Its function is as follows. Participates actively in the response to hyperosmotic and heat shock by preventing the aggregation of stress-denatured proteins and by disaggregating proteins, also in an autonomous, DnaK-independent fashion. Unfolded proteins bind initially to DnaJ; upon interaction with the DnaJ-bound protein, DnaK hydrolyzes its bound ATP, resulting in the formation of a stable complex. GrpE releases ADP from DnaK; ATP binding to DnaK triggers the release of the substrate protein, thus completing the reaction cycle. Several rounds of ATP-dependent interactions between DnaJ, DnaK and GrpE are required for fully efficient folding. Also involved, together with DnaK and GrpE, in the DNA replication of plasmids through activation of initiation proteins. In Cupriavidus necator (strain ATCC 17699 / DSM 428 / KCTC 22496 / NCIMB 10442 / H16 / Stanier 337) (Ralstonia eutropha), this protein is Chaperone protein DnaJ.